The primary structure comprises 239 residues: Ribonuclease PH (239 aa).

Phosphate-binding positions include arginine 86 and glycine 124–arginine 126.

This sequence belongs to the RNase PH family. As to quaternary structure, homohexameric ring arranged as a trimer of dimers.

It catalyses the reaction tRNA(n+1) + phosphate = tRNA(n) + a ribonucleoside 5'-diphosphate. Its function is as follows. Phosphorolytic 3'-5' exoribonuclease that plays an important role in tRNA 3'-end maturation. Removes nucleotide residues following the 3'-CCA terminus of tRNAs; can also add nucleotides to the ends of RNA molecules by using nucleoside diphosphates as substrates, but this may not be physiologically important. Probably plays a role in initiation of 16S rRNA degradation (leading to ribosome degradation) during starvation. This is Ribonuclease PH from Allorhizobium ampelinum (strain ATCC BAA-846 / DSM 112012 / S4) (Agrobacterium vitis (strain S4)).